Here is a 212-residue protein sequence, read N- to C-terminus: Redox-sensing transcriptional repressor Rex (212 aa).

The H-T-H motif DNA-binding region spans 18 to 57; that stretch reads LYYRFVNTLKSKGIDRVNSKAISEALNIESATIRRDFSYF. 92–97 is a binding site for NAD(+); that stretch reads GVGNLG.

The protein belongs to the transcriptional regulatory Rex family. Homodimer.

Its subcellular location is the cytoplasm. Its function is as follows. Modulates transcription in response to changes in cellular NADH/NAD(+) redox state. The protein is Redox-sensing transcriptional repressor Rex of Staphylococcus haemolyticus (strain JCSC1435).